The following is a 152-amino-acid chain: Methylglyoxal synthase (152 aa).

In terms of domain architecture, MGS-like spans 6–152 (RTLATEKNIA…YEGYLKERLK (147 aa)). Substrate contacts are provided by residues H19, K23, 45 to 48 (TGTT), and 65 to 66 (SG). Residue D71 is the Proton donor/acceptor of the active site. A substrate-binding site is contributed by H98.

It belongs to the methylglyoxal synthase family.

The enzyme catalyses dihydroxyacetone phosphate = methylglyoxal + phosphate. Catalyzes the formation of methylglyoxal from dihydroxyacetone phosphate. In Proteus mirabilis (strain HI4320), this protein is Methylglyoxal synthase.